A 35-amino-acid polypeptide reads, in one-letter code: MSDIN-like toxin proprotein 6 (35 aa).

Positions 1 to 10 (MSDINGTRLP) are excised as a propeptide. The cyclopeptide (Ile-Pro) cross-link spans 11–20 (IPGLIPLGIP). A propeptide spanning residues 21–35 (CVSDDVNPTLTRGER) is cleaved from the precursor.

Belongs to the MSDIN fungal toxin family. Post-translationally, processed by the macrocyclase-peptidase enzyme POPB to yield a toxic cyclic decapeptide. POPB first removes 10 residues from the N-terminus. Conformational trapping of the remaining peptide forces the enzyme to release this intermediate rather than proceed to macrocyclization. The enzyme rebinds the remaining peptide in a different conformation and catalyzes macrocyclization of the N-terminal 10 residues.

Probable toxin that belongs to the MSDIN-like toxin family responsible for a large number of food poisoning cases and deaths. In Amanita bisporigera (Destroying angel), this protein is MSDIN-like toxin proprotein 6.